Here is a 329-residue protein sequence, read N- to C-terminus: DNA-directed RNA polymerase subunit alpha (329 aa).

The tract at residues 1-235 (MQGSVTEFLK…EQLDAFVDLR (235 aa)) is alpha N-terminal domain (alpha-NTD). An alpha C-terminal domain (alpha-CTD) region spans residues 249-329 (FDPILLRPVD…NWPPASIAED (81 aa)).

It belongs to the RNA polymerase alpha chain family. As to quaternary structure, homodimer. The RNAP catalytic core consists of 2 alpha, 1 beta, 1 beta' and 1 omega subunit. When a sigma factor is associated with the core the holoenzyme is formed, which can initiate transcription.

It catalyses the reaction RNA(n) + a ribonucleoside 5'-triphosphate = RNA(n+1) + diphosphate. In terms of biological role, DNA-dependent RNA polymerase catalyzes the transcription of DNA into RNA using the four ribonucleoside triphosphates as substrates. The chain is DNA-directed RNA polymerase subunit alpha from Mannheimia succiniciproducens (strain KCTC 0769BP / MBEL55E).